The chain runs to 295 residues: Elongation factor Ts (295 aa).

An involved in Mg(2+) ion dislocation from EF-Tu region spans residues 79-82; sequence TDFV.

Belongs to the EF-Ts family.

Its subcellular location is the cytoplasm. Functionally, associates with the EF-Tu.GDP complex and induces the exchange of GDP to GTP. It remains bound to the aminoacyl-tRNA.EF-Tu.GTP complex up to the GTP hydrolysis stage on the ribosome. The protein is Elongation factor Ts of Bacillus cereus (strain B4264).